Reading from the N-terminus, the 545-residue chain is CTP synthase (545 aa).

Residues 1–266 (MTTRYIFVTG…DDLVIKRFNL (266 aa)) form an amidoligase domain region. Ser-14 serves as a coordination point for CTP. A UTP-binding site is contributed by Ser-14. Residues 15 to 20 (SLGKGI) and Asp-72 contribute to the ATP site. Mg(2+)-binding residues include Asp-72 and Glu-140. CTP is bound by residues 147–149 (DIE), 187–192 (KTKPTQ), and Lys-223. Residues 187–192 (KTKPTQ) and Lys-223 each bind UTP. Residue 239-241 (KDV) coordinates ATP. One can recognise a Glutamine amidotransferase type-1 domain in the interval 291 to 542 (TIGMVGKYIE…IAASYAYQKR (252 aa)). An L-glutamine-binding site is contributed by Gly-352. Cys-379 (nucleophile; for glutamine hydrolysis) is an active-site residue. Residues 380-383 (LGMQ), Glu-403, and Arg-470 each bind L-glutamine. Active-site residues include His-515 and Glu-517.

Belongs to the CTP synthase family. Homotetramer.

The catalysed reaction is UTP + L-glutamine + ATP + H2O = CTP + L-glutamate + ADP + phosphate + 2 H(+). It catalyses the reaction L-glutamine + H2O = L-glutamate + NH4(+). It carries out the reaction UTP + NH4(+) + ATP = CTP + ADP + phosphate + 2 H(+). It functions in the pathway pyrimidine metabolism; CTP biosynthesis via de novo pathway; CTP from UDP: step 2/2. Allosterically activated by GTP, when glutamine is the substrate; GTP has no effect on the reaction when ammonia is the substrate. The allosteric effector GTP functions by stabilizing the protein conformation that binds the tetrahedral intermediate(s) formed during glutamine hydrolysis. Inhibited by the product CTP, via allosteric rather than competitive inhibition. In terms of biological role, catalyzes the ATP-dependent amination of UTP to CTP with either L-glutamine or ammonia as the source of nitrogen. Regulates intracellular CTP levels through interactions with the four ribonucleotide triphosphates. This is CTP synthase from Shewanella frigidimarina (strain NCIMB 400).